Here is a 353-residue protein sequence, read N- to C-terminus: Rhodopsin (353 aa).

Over 1–36 (MNGTEGPFFYVPMLNTTGIVRSPYDYPQYYLVNPAA) the chain is Extracellular. N-linked (GlcNAc...) asparagine glycans are attached at residues N2 and N15. The chain crosses the membrane as a helical span at residues 37-61 (YAALGAYMFLLILLGFPINFLTLYV). At 62–73 (TIEHKKLRTPLN) the chain is on the cytoplasmic side. A helical membrane pass occupies residues 74–96 (YILLNLAVANLFMVFGGFTTTMY). The Extracellular segment spans residues 97-110 (TSMHGYFVLGRLGC). C110 and C187 form a disulfide bridge. The helical transmembrane segment at 111–133 (NLEGFFATLGGEIGLWSLVVLAI) threads the bilayer. The short motif at 134 to 136 (ERW) is the 'Ionic lock' involved in activated form stabilization element. Residues 134–152 (ERWMVVCKPISNFRFGENH) are Cytoplasmic-facing. A helical transmembrane segment spans residues 153–173 (AIMGLAFTWIMACACAVPPLV). Topologically, residues 174-202 (GWSRYIPEGMQCSCGVDYYTRAEGFNNES) are extracellular. N200 is a glycosylation site (N-linked (GlcNAc...) asparagine). A helical membrane pass occupies residues 203–224 (FVVYMFICHFLIPMAVVFFCYG). At 225–252 (RLLCAVKEAAAAQQESETTQRAEREVTR) the chain is on the cytoplasmic side. Residues 253 to 274 (MVVIMVVAFLICWLPYAGVAWW) traverse the membrane as a helical segment. The Extracellular portion of the chain corresponds to 275 to 286 (IFTHQGSEFGPV). The helical transmembrane segment at 287-308 (FMTIPAFFAKSSSIYNPLIYIC) threads the bilayer. K296 is subject to N6-(retinylidene)lysine. At 309 to 353 (MNKQFRHCMITTLCCGKNPFEEEEGASTTSKTEASSVSSSSVSPA) the chain is on the cytoplasmic side. Residues C322 and C323 are each lipidated (S-palmitoyl cysteine). Residues 330 to 353 (EEEGASTTSKTEASSVSSSSVSPA) form a disordered region. Positions 334-353 (ASTTSKTEASSVSSSSVSPA) are enriched in low complexity.

This sequence belongs to the G-protein coupled receptor 1 family. Opsin subfamily. Phosphorylated on some or all of the serine and threonine residues present in the C-terminal region. In terms of processing, contains one covalently linked retinal chromophore.

It localises to the membrane. It is found in the cell projection. Its subcellular location is the cilium. The protein localises to the photoreceptor outer segment. Its function is as follows. Photoreceptor required for image-forming vision at low light intensity. While most salt water fish species use retinal as chromophore, most freshwater fish use 3-dehydroretinal, or a mixture of retinal and 3-dehydroretinal. Light-induced isomerization of 11-cis to all-trans retinal triggers a conformational change that activates signaling via G-proteins. Subsequent receptor phosphorylation mediates displacement of the bound G-protein alpha subunit by arrestin and terminates signaling. The protein is Rhodopsin (rho) of Tetraodon nigroviridis (Spotted green pufferfish).